A 671-amino-acid chain; its full sequence is DNA ligase (671 aa).

NAD(+) contacts are provided by residues 38-42 (DKEFD), 87-88 (SL), and glutamate 113. Lysine 115 functions as the N6-AMP-lysine intermediate in the catalytic mechanism. Positions 136, 170, 282, and 306 each coordinate NAD(+). Residues cysteine 396, cysteine 399, cysteine 414, and cysteine 419 each contribute to the Zn(2+) site. Residues 586–671 (SDLQPFVGQS…LLKQEGIAID (86 aa)) form the BRCT domain.

It belongs to the NAD-dependent DNA ligase family. LigA subfamily. It depends on Mg(2+) as a cofactor. Requires Mn(2+) as cofactor.

It carries out the reaction NAD(+) + (deoxyribonucleotide)n-3'-hydroxyl + 5'-phospho-(deoxyribonucleotide)m = (deoxyribonucleotide)n+m + AMP + beta-nicotinamide D-nucleotide.. In terms of biological role, DNA ligase that catalyzes the formation of phosphodiester linkages between 5'-phosphoryl and 3'-hydroxyl groups in double-stranded DNA using NAD as a coenzyme and as the energy source for the reaction. It is essential for DNA replication and repair of damaged DNA. The protein is DNA ligase of Leptospira biflexa serovar Patoc (strain Patoc 1 / Ames).